A 121-amino-acid polypeptide reads, in one-letter code: Small ribosomal subunit protein uS13 (121 aa).

A disordered region spans residues 91-121; that stretch reads HRRGLPVRGQKTKNNARTRKGPVKTVANKKK.

It belongs to the universal ribosomal protein uS13 family. In terms of assembly, part of the 30S ribosomal subunit. Forms a loose heterodimer with protein S19. Forms two bridges to the 50S subunit in the 70S ribosome.

Located at the top of the head of the 30S subunit, it contacts several helices of the 16S rRNA. In the 70S ribosome it contacts the 23S rRNA (bridge B1a) and protein L5 of the 50S subunit (bridge B1b), connecting the 2 subunits; these bridges are implicated in subunit movement. Contacts the tRNAs in the A and P-sites. The protein is Small ribosomal subunit protein uS13 of Staphylococcus saprophyticus subsp. saprophyticus (strain ATCC 15305 / DSM 20229 / NCIMB 8711 / NCTC 7292 / S-41).